Reading from the N-terminus, the 359-residue chain is Histamine H2 receptor (359 aa).

The Extracellular portion of the chain corresponds to M1–S22. N4 carries N-linked (GlcNAc...) asparagine glycosylation. The chain crosses the membrane as a helical span at residues V23–G44. Residues L45–I57 lie on the Cytoplasmic side of the membrane. Residues V58–S81 form a helical membrane-spanning segment. At C82–N92 the chain is on the extracellular side. The cysteines at positions 91 and 174 are disulfide-linked. A helical transmembrane segment spans residues I93 to L114. At D115–R134 the chain is on the cytoplasmic side. Residues V135–N159 form a helical membrane-spanning segment. Over S160–L180 the chain is Extracellular. A helical transmembrane segment spans residues V181–R204. Residues I205–V234 lie on the Cytoplasmic side of the membrane. The helical transmembrane segment at T235–G258 threads the bilayer. Residues L259–E267 are Extracellular-facing. A helical transmembrane segment spans residues A268 to A289. Residues T290–R359 are Cytoplasmic-facing. A lipid anchor (S-palmitoyl cysteine) is attached at C305. Residues H310–N327 show a composition bias toward polar residues. The interval H310–R359 is disordered. The span at Q328–L340 shows a compositional bias: basic and acidic residues.

The protein belongs to the G-protein coupled receptor 1 family. In terms of tissue distribution, gastric fundus and, to a lesser extent, in brain.

The protein resides in the cell membrane. Its function is as follows. The H2 subclass of histamine receptors mediates gastric acid secretion. The activity of this receptor is mediated by G proteins which activate adenylyl cyclase. The sequence is that of Histamine H2 receptor (HRH2) from Canis lupus familiaris (Dog).